We begin with the raw amino-acid sequence, 456 residues long: Bifunctional protein GlmU (456 aa).

Residues M1–R229 are pyrophosphorylase. Residues L11–G14, K25, Q76, G81–T82, Y103–D105, G140, E154, N169, and N227 each bind UDP-N-acetyl-alpha-D-glucosamine. D105 provides a ligand contact to Mg(2+). Residue N227 coordinates Mg(2+). The linker stretch occupies residues L230–S250. The tract at residues G251–K456 is N-acetyltransferase. UDP-N-acetyl-alpha-D-glucosamine-binding residues include R333 and K351. H363 serves as the catalytic Proton acceptor. Positions 366 and 377 each coordinate UDP-N-acetyl-alpha-D-glucosamine. Acetyl-CoA-binding positions include A380, N386–Y387, S405, A423, and R440.

In the N-terminal section; belongs to the N-acetylglucosamine-1-phosphate uridyltransferase family. It in the C-terminal section; belongs to the transferase hexapeptide repeat family. As to quaternary structure, homotrimer. Requires Mg(2+) as cofactor.

The protein resides in the cytoplasm. The enzyme catalyses alpha-D-glucosamine 1-phosphate + acetyl-CoA = N-acetyl-alpha-D-glucosamine 1-phosphate + CoA + H(+). The catalysed reaction is N-acetyl-alpha-D-glucosamine 1-phosphate + UTP + H(+) = UDP-N-acetyl-alpha-D-glucosamine + diphosphate. The protein operates within nucleotide-sugar biosynthesis; UDP-N-acetyl-alpha-D-glucosamine biosynthesis; N-acetyl-alpha-D-glucosamine 1-phosphate from alpha-D-glucosamine 6-phosphate (route II): step 2/2. It participates in nucleotide-sugar biosynthesis; UDP-N-acetyl-alpha-D-glucosamine biosynthesis; UDP-N-acetyl-alpha-D-glucosamine from N-acetyl-alpha-D-glucosamine 1-phosphate: step 1/1. It functions in the pathway bacterial outer membrane biogenesis; LPS lipid A biosynthesis. Catalyzes the last two sequential reactions in the de novo biosynthetic pathway for UDP-N-acetylglucosamine (UDP-GlcNAc). The C-terminal domain catalyzes the transfer of acetyl group from acetyl coenzyme A to glucosamine-1-phosphate (GlcN-1-P) to produce N-acetylglucosamine-1-phosphate (GlcNAc-1-P), which is converted into UDP-GlcNAc by the transfer of uridine 5-monophosphate (from uridine 5-triphosphate), a reaction catalyzed by the N-terminal domain. This is Bifunctional protein GlmU from Salmonella heidelberg (strain SL476).